The primary structure comprises 380 residues: Probable dual-specificity RNA methyltransferase RlmN (380 aa).

The active-site Proton acceptor is glutamate 112. The Radical SAM core domain maps to 118–358 (YPDRVTACLS…TTVRDTRGRE (241 aa)). A disulfide bridge connects residues cysteine 125 and cysteine 363. [4Fe-4S] cluster contacts are provided by cysteine 132, cysteine 136, and cysteine 139. Residues 187–188 (GE), serine 221, 244–246 (SLH), and asparagine 320 contribute to the S-adenosyl-L-methionine site. Catalysis depends on cysteine 363, which acts as the S-methylcysteine intermediate.

The protein belongs to the radical SAM superfamily. RlmN family. Requires [4Fe-4S] cluster as cofactor.

It is found in the cytoplasm. The enzyme catalyses adenosine(2503) in 23S rRNA + 2 reduced [2Fe-2S]-[ferredoxin] + 2 S-adenosyl-L-methionine = 2-methyladenosine(2503) in 23S rRNA + 5'-deoxyadenosine + L-methionine + 2 oxidized [2Fe-2S]-[ferredoxin] + S-adenosyl-L-homocysteine. It catalyses the reaction adenosine(37) in tRNA + 2 reduced [2Fe-2S]-[ferredoxin] + 2 S-adenosyl-L-methionine = 2-methyladenosine(37) in tRNA + 5'-deoxyadenosine + L-methionine + 2 oxidized [2Fe-2S]-[ferredoxin] + S-adenosyl-L-homocysteine. Its function is as follows. Specifically methylates position 2 of adenine 2503 in 23S rRNA and position 2 of adenine 37 in tRNAs. The chain is Probable dual-specificity RNA methyltransferase RlmN from Salinispora arenicola (strain CNS-205).